Here is a 145-residue protein sequence, read N- to C-terminus: MLPRGLKMAPRGKRLSSTPLEILFFLNGWYNATYFLLELFIFLYKGVLLPYPTANLVLDVVMLLLYLGIEVIRLFFGTKGNLCQRKMPLSISVALTFPSAMMASYYLLLQTYVLRLEAIMNGILLFFCGSELLLEVLTLAAFSRI.

A run of 4 helical transmembrane segments spans residues 22–42, 56–76, 89–109, and 122–142; these read ILFFLNGWYNATYFLLELFIF, LVLDVVMLLLYLGIEVIRLFF, LSISVALTFPSAMMASYYLLL, and GILLFFCGSELLLEVLTLAAF.

Part of the tectonic-like complex (also named B9 complex). Interacts with TMEM107.

It is found in the membrane. Its subcellular location is the cytoplasm. The protein resides in the cytoskeleton. It localises to the cilium basal body. Part of the tectonic-like complex which is required for tissue-specific ciliogenesis and may regulate ciliary membrane composition. The protein is Transmembrane protein 216 (TMEM216) of Homo sapiens (Human).